Reading from the N-terminus, the 33-residue chain is Beta/kappa-theraphotoxin-Hlv1a (33 aa).

Disulfide bonds link Cys-2/Cys-17, Cys-9/Cys-22, and Cys-16/Cys-29. The residue at position 33 (Ile-33) is an Isoleucine amide.

This sequence belongs to the neurotoxin 10 (Hwtx-1) family. 11 (haplotoxin-2) subfamily. As to expression, expressed by the venom gland.

It localises to the secreted. In terms of biological role, spider venom neurotoxin that blocks voltage-gated sodium channel Nav1.3/SCN3A in human (IC(50)=80 nM) and rat (IC(50)=160 nM). Partially inhibits human Kv11.1/KCNH2/ERG (25% at 175 uM). This chain is Beta/kappa-theraphotoxin-Hlv1a, found in Cyriopagopus lividus (Cobalt blue tarantula).